A 224-amino-acid polypeptide reads, in one-letter code: MPLTPEPPSGRVEGPPAWEAAPWPSLPCGPCIPIMLVLATLAALFILTTAVLAERLFRRALRPDPSHRAPTLVWRPGGELWIEPMGTARERSEDWYGSAVPLLTDRAPEPPTQVGTLEARATAPPAPSAPNSAPSNLGPQTVLEVPARSTFWGPQPWEGRPPATGLVSWAEPEQRPEASVQFGSPQARRQRPGSPDPEWGLQPRVTLEQISAFWKREGRTSVGF.

A glycan (O-linked (GalNAc...) threonine) is linked at Thr4. Residues 32-52 traverse the membrane as a helical segment; that stretch reads IPIMLVLATLAALFILTTAVL. Disordered regions lie at residues 104 to 138 and 152 to 203; these read TDRA…SNLG and WGPQ…GLQP. Phosphothreonine is present on residues Thr112 and Thr116. Residue Ser194 is modified to Phosphoserine.

In terms of processing, O-glycosylated with core 1 or possibly core 8 glycans.

The protein localises to the membrane. The sequence is that of Transmembrane protein C16orf54 (C16orf54) from Homo sapiens (Human).